Here is a 255-residue protein sequence, read N- to C-terminus: MKAYAKANIFLKLTGFDSRKYHLLESRFILLKDVFDELELVDKESDSKKEFEIISNFKCENNIIQKAYLLLSRRYNNELKELFSKKSLKLTKNIPVCAGLGGGSSDCASFLLLINETLNLKLNLQELINLSIQLGSDIAFFLSGFHSANVSSCGEIIEEFEDDIPNLKWTFPQISCQTKAVYDEFDRGIFDFQKNNNQAQIYKKLSTKELLQNFKNKELNDLFTPCATLYPKMKSYLQEDFFLSGSGSSVFKVDR.

Lys-6 is an active-site residue. An ATP-binding site is contributed by 95 to 105 (PVCAGLGGGSS). Asp-137 is a catalytic residue.

The protein belongs to the GHMP kinase family. IspE subfamily.

It carries out the reaction 4-CDP-2-C-methyl-D-erythritol + ATP = 4-CDP-2-C-methyl-D-erythritol 2-phosphate + ADP + H(+). Its pathway is isoprenoid biosynthesis; isopentenyl diphosphate biosynthesis via DXP pathway; isopentenyl diphosphate from 1-deoxy-D-xylulose 5-phosphate: step 3/6. Catalyzes the phosphorylation of the position 2 hydroxy group of 4-diphosphocytidyl-2C-methyl-D-erythritol. The polypeptide is 4-diphosphocytidyl-2-C-methyl-D-erythritol kinase (Campylobacter jejuni subsp. jejuni serotype O:2 (strain ATCC 700819 / NCTC 11168)).